We begin with the raw amino-acid sequence, 182 residues long: Troponin I, fast skeletal muscle (182 aa).

Gly2 bears the N-acetylglycine mark. The tract at residues 2 to 48 (GDEEKRNRAITARRQHLKSVMLQIAATELEKEESRRESEKQNYLSEH) is involved in binding TNC. A Phosphothreonine modification is found at Thr12. The span at 29–41 (ELEKEESRRESEK) shows a compositional bias: basic and acidic residues. The disordered stretch occupies residues 29-53 (ELEKEESRRESEKQNYLSEHCPPLH). The segment at 97–117 (NQKLFDLRGKFKRPPLRRVRM) is involved in binding TNC and actin. Phosphoserine is present on Ser118.

Belongs to the troponin I family. In terms of assembly, binds to actin and tropomyosin.

Its function is as follows. Troponin I is the inhibitory subunit of troponin, the thin filament regulatory complex which confers calcium-sensitivity to striated muscle actomyosin ATPase activity. This is Troponin I, fast skeletal muscle (Tnni2) from Rattus norvegicus (Rat).